Consider the following 1315-residue polypeptide: Claspin (1315 aa).

Disordered stretches follow at residues 22 to 276 and 345 to 474; these read EAAD…AARL and PADA…EQKT. Phosphoserine occurs at positions 26, 42, 46, 53, 65, and 67. Residues 65 to 74 show a composition bias toward acidic residues; sequence SDSEAEDRDD. The segment covering 91 to 101 has biased composition (polar residues); the sequence is NLHSGKSQSRS. The segment covering 108–118 has biased composition (acidic residues); that stretch reads DSDESDMEETP. 3 positions are modified to phosphoserine: S109, S112, and S119. Polar residues predominate over residues 119–128; sequence SQESPETQEA. Basic and acidic residues-rich tracts occupy residues 153-178 and 186-197; these read LLRE…MEKI and TRCEESDADRPL. A coiled-coil region spans residues 159–187; that stretch reads EGKAKSKRRLEKEERTMEKIRRLKKKETR. A compositionally biased stretch (acidic residues) spans 205–228; sequence EDSDLFETGLEEENDSALEDEESL. S220 is modified (phosphoserine). The span at 235 to 245 shows a compositional bias: basic residues; that stretch reads VKNKVKNRKKK. S255 carries the phosphoserine modification. 2 stretches are compositionally biased toward basic and acidic residues: residues 391 to 415 and 455 to 470; these read ACGK…DDRP and EELK…EGMP. Residue S522 is modified to Phosphoserine. Residues 599-626 adopt a coiled-coil conformation; sequence EKLQMLKAKLQEAMKLRRLEERQKRQAL. Residues 625–691 are disordered; sequence ALFKLDNEDG…SSDIGKSVAL (67 aa). The span at 632–657 shows a compositional bias: acidic residues; it reads EDGFEEEEEEEEMTDESEEDGEEETT. Positions 669 to 679 are enriched in basic and acidic residues; that stretch reads KDEKETDKENT. 5 positions are modified to phosphoserine: S698, S701, S709, S722, and S740. The tract at residues 713 to 750 is disordered; the sequence is MGYFPTEEKSETDEYLAKQSDKLDEDDSSSLLTKESSH. The segment covering 741-750 has biased composition (low complexity); it reads SSLLTKESSH. A phosphoserine mark is found at S785, S787, S810, S816, and S823. K868 bears the N6-acetyllysine mark. CKB motif repeat units follow at residues 887–896 and 917–926; these read ELLDLCTGQF and ELLNLCSGKF. At T893 the chain carries Phosphothreonine; by CHEK1. Disordered regions lie at residues 924 to 1002 and 1032 to 1052; these read GKFP…NDEE and EDEA…DGEE. S932 is modified (phosphoserine). Residues 954 to 963 form a CKB motif 3 repeat; sequence EALALCSGSF. Residues 966-1063 form an acidic patch region; sequence DREEEGEEEE…DEYEEDVIDE (98 aa). Acidic residues-rich tracts occupy residues 967 to 977, 990 to 1002, and 1043 to 1052; these read REEEGEEEEFG, SDED…NDEE, and GSEDEYDGEE. A phosphoserine mark is found at S990, S996, and S998. Residues 1001–1036 adopt a coiled-coil conformation; it reads EELALDLEDDEEELLKQSEKMKRQMRLKKYLEDEAE. A phosphoserine mark is found at S1133 and S1265. The disordered stretch occupies residues 1264-1315; the sequence is LSPTKAEAAKDSSKPQVRRRGLSSMMSPSPKRLKTNGSSPGPKRSIFRYLES.

This sequence belongs to the claspin family. In terms of assembly, interacts (phosphorylation-dependent) with CHEK1; regulates CLSPN function in checkpoint for DNA damage and replication. Interacts with ATR and RAD9A and these interactions are slightly reduced during checkpoint activation. Interacts with BRCA1 and this interaction increases during checkpoint activation. Interacts with TIMELESS; the interaction is required for leading-strand replication. Associates with the MCM2-7 complex and other replisome factors. Interacts (via the acidic patch) with CDC7; the interaction is required for phosphorylation of MCM proteins and CLASPIN by CDC7. Interacts with PCNA. Interacts with FZR1. Post-translationally, phosphorylated. Undergoes ATR-dependent phosphorylation by CHEK1 during activation of DNA replication or damage checkpoints. Phosphorylation by CSNK1G1/CK1 promotes CHEK1 binding. Phosphorylated by CDC7 during DNA replication, phosphorylation inhibits interaction between the acidic patch and N-terminal segments leading to increased binding to DNA and PCNA. In terms of processing, ubiquitinated by the anaphase promoting complex/cyclosome (APC/C) during G1 phase, leading to its degradation by the proteasome. Ubiquitination is mediated via its interaction with FZR1/CDH1. Following DNA damage, it is deubiquitinated by USP28 in G2 phase, preventing its degradation. Proteolytically cleaved by caspase-7 (CASP7) in response to apoptosis, leading to its inactivation.

The protein localises to the nucleus. In terms of biological role, required for checkpoint mediated cell cycle arrest in response to inhibition of DNA replication or to DNA damage induced by both ionizing and UV irradiation. Adapter protein which binds to BRCA1 and the checkpoint kinase CHEK1 and facilitates the ATR-dependent phosphorylation of both proteins. Also required to maintain normal rates of replication fork progression during unperturbed DNA replication. Binds directly to DNA, with particular affinity for branched or forked molecules and interacts with multiple protein components of the replisome such as the MCM2-7 complex and TIMELESS. Important for initiation of DNA replication, recruits kinase CDC7 to phosphorylate MCM2-7 components. In Mus musculus (Mouse), this protein is Claspin (Clspn).